We begin with the raw amino-acid sequence, 79 residues long: Putative sulfur carrier protein TM_0983 (79 aa).

Catalysis depends on Cys-17, which acts as the Cysteine persulfide intermediate.

It belongs to the sulfur carrier protein TusA family.

This chain is Putative sulfur carrier protein TM_0983, found in Thermotoga maritima (strain ATCC 43589 / DSM 3109 / JCM 10099 / NBRC 100826 / MSB8).